A 477-amino-acid polypeptide reads, in one-letter code: Ribulose bisphosphate carboxylase large chain (477 aa).

Positions 1–2 (MS) are excised as a propeptide. N-acetylproline is present on P3. K14 is modified (N6,N6,N6-trimethyllysine). The substrate site is built by N123 and T173. K175 (proton acceptor) is an active-site residue. Residue K177 coordinates substrate. 3 residues coordinate Mg(2+): K201, D203, and E204. K201 carries the post-translational modification N6-carboxylysine. Catalysis depends on H294, which acts as the Proton acceptor. R295, H327, and S379 together coordinate substrate.

It belongs to the RuBisCO large chain family. Type I subfamily. In terms of assembly, heterohexadecamer of 8 large chains and 8 small chains; disulfide-linked. The disulfide link is formed within the large subunit homodimers. The cofactor is Mg(2+). The disulfide bond which can form in the large chain dimeric partners within the hexadecamer appears to be associated with oxidative stress and protein turnover.

It is found in the plastid. It localises to the chloroplast. It carries out the reaction 2 (2R)-3-phosphoglycerate + 2 H(+) = D-ribulose 1,5-bisphosphate + CO2 + H2O. It catalyses the reaction D-ribulose 1,5-bisphosphate + O2 = 2-phosphoglycolate + (2R)-3-phosphoglycerate + 2 H(+). In terms of biological role, ruBisCO catalyzes two reactions: the carboxylation of D-ribulose 1,5-bisphosphate, the primary event in carbon dioxide fixation, as well as the oxidative fragmentation of the pentose substrate in the photorespiration process. Both reactions occur simultaneously and in competition at the same active site. The sequence is that of Ribulose bisphosphate carboxylase large chain from Nicotiana tomentosiformis (Tobacco).